The sequence spans 49 residues: Beta-toxin Rc1 (49 aa).

Disulfide bonds link Cys-15–Cys-31, Cys-22–Cys-40, and Cys-26–Cys-42.

Belongs to the long (4 C-C) scorpion toxin superfamily. Sodium channel inhibitor family. Beta subfamily. In terms of tissue distribution, expressed by the venom gland.

It is found in the secreted. Beta toxins bind voltage-independently at site-4 of sodium channels (Nav) and shift the voltage of activation toward more negative potentials thereby affecting sodium channel activation and promoting spontaneous and repetitive firing. This toxin acts on X.laevis Nav1.6/SCN8A and insect BgNav1 channels, and also displays a small but significant effect on X.laevis Nav1.4/SCN4A channels. In mice induces nociception (licking and lifting behaviors) during the first 15 minutes after injection, and increases the release of TNF-alpha in J774.1 cells. In Rhopalurus crassicauda (Scorpion), this protein is Beta-toxin Rc1.